We begin with the raw amino-acid sequence, 203 residues long: Molybdenum cofactor guanylyltransferase (203 aa).

GTP-binding positions include 12–14 (LAG), K25, N53, D71, and D101. Position 101 (D101) interacts with Mg(2+).

This sequence belongs to the MobA family. In terms of assembly, monomer. Mg(2+) serves as cofactor.

It is found in the cytoplasm. It catalyses the reaction Mo-molybdopterin + GTP + H(+) = Mo-molybdopterin guanine dinucleotide + diphosphate. Functionally, transfers a GMP moiety from GTP to Mo-molybdopterin (Mo-MPT) cofactor (Moco or molybdenum cofactor) to form Mo-molybdopterin guanine dinucleotide (Mo-MGD) cofactor. This Cupriavidus metallidurans (strain ATCC 43123 / DSM 2839 / NBRC 102507 / CH34) (Ralstonia metallidurans) protein is Molybdenum cofactor guanylyltransferase.